A 276-amino-acid chain; its full sequence is Shikimate dehydrogenase (NADP(+)) (276 aa).

Shikimate is bound by residues 15 to 17 and threonine 62; that span reads SKS. Lysine 66 functions as the Proton acceptor in the catalytic mechanism. Residue glutamate 78 participates in NADP(+) binding. 2 residues coordinate shikimate: asparagine 87 and aspartate 103. NADP(+)-binding positions include 128-132 and isoleucine 217; that span reads GAGGA. Shikimate is bound at residue tyrosine 219. Glycine 240 provides a ligand contact to NADP(+).

It belongs to the shikimate dehydrogenase family. Homodimer.

The catalysed reaction is shikimate + NADP(+) = 3-dehydroshikimate + NADPH + H(+). It functions in the pathway metabolic intermediate biosynthesis; chorismate biosynthesis; chorismate from D-erythrose 4-phosphate and phosphoenolpyruvate: step 4/7. Functionally, involved in the biosynthesis of the chorismate, which leads to the biosynthesis of aromatic amino acids. Catalyzes the reversible NADPH linked reduction of 3-dehydroshikimate (DHSA) to yield shikimate (SA). The polypeptide is Shikimate dehydrogenase (NADP(+)) (Lysinibacillus sphaericus (strain C3-41)).